Here is a 742-residue protein sequence, read N- to C-terminus: Phosphoribosylformylglycinamidine synthase subunit PurL (742 aa).

His54 is an active-site residue. Residues Tyr57 and Lys96 each contribute to the ATP site. Glu98 contributes to the Mg(2+) binding site. Substrate is bound by residues 99 to 102 (SHNH) and Arg121. The active-site Proton acceptor is His100. Position 122 (Asp122) interacts with Mg(2+). Gln245 contributes to the substrate binding site. A Mg(2+)-binding site is contributed by Asp273. 317–319 (ESQ) is a substrate binding site. The ATP site is built by Asp500 and Gly537. A Mg(2+)-binding site is contributed by Asn538. Residue Ser540 participates in substrate binding.

The protein belongs to the FGAMS family. As to quaternary structure, monomer. Part of the FGAM synthase complex composed of 1 PurL, 1 PurQ and 2 PurS subunits.

It is found in the cytoplasm. The enzyme catalyses N(2)-formyl-N(1)-(5-phospho-beta-D-ribosyl)glycinamide + L-glutamine + ATP + H2O = 2-formamido-N(1)-(5-O-phospho-beta-D-ribosyl)acetamidine + L-glutamate + ADP + phosphate + H(+). It functions in the pathway purine metabolism; IMP biosynthesis via de novo pathway; 5-amino-1-(5-phospho-D-ribosyl)imidazole from N(2)-formyl-N(1)-(5-phospho-D-ribosyl)glycinamide: step 1/2. Part of the phosphoribosylformylglycinamidine synthase complex involved in the purines biosynthetic pathway. Catalyzes the ATP-dependent conversion of formylglycinamide ribonucleotide (FGAR) and glutamine to yield formylglycinamidine ribonucleotide (FGAM) and glutamate. The FGAM synthase complex is composed of three subunits. PurQ produces an ammonia molecule by converting glutamine to glutamate. PurL transfers the ammonia molecule to FGAR to form FGAM in an ATP-dependent manner. PurS interacts with PurQ and PurL and is thought to assist in the transfer of the ammonia molecule from PurQ to PurL. This chain is Phosphoribosylformylglycinamidine synthase subunit PurL, found in Geobacillus sp. (strain WCH70).